A 293-amino-acid polypeptide reads, in one-letter code: Phosphoribosylaminoimidazole-succinocarboxamide synthase (293 aa).

This sequence belongs to the SAICAR synthetase family.

The enzyme catalyses 5-amino-1-(5-phospho-D-ribosyl)imidazole-4-carboxylate + L-aspartate + ATP = (2S)-2-[5-amino-1-(5-phospho-beta-D-ribosyl)imidazole-4-carboxamido]succinate + ADP + phosphate + 2 H(+). Its pathway is purine metabolism; IMP biosynthesis via de novo pathway; 5-amino-1-(5-phospho-D-ribosyl)imidazole-4-carboxamide from 5-amino-1-(5-phospho-D-ribosyl)imidazole-4-carboxylate: step 1/2. The protein is Phosphoribosylaminoimidazole-succinocarboxamide synthase of Bordetella petrii (strain ATCC BAA-461 / DSM 12804 / CCUG 43448).